A 77-amino-acid chain; its full sequence is Acyl carrier protein (77 aa).

The 76-residue stretch at Ser-2–Ser-77 folds into the Carrier domain. An O-(pantetheine 4'-phosphoryl)serine modification is found at Ser-37.

This sequence belongs to the acyl carrier protein (ACP) family. In terms of processing, 4'-phosphopantetheine is transferred from CoA to a specific serine of apo-ACP by AcpS. This modification is essential for activity because fatty acids are bound in thioester linkage to the sulfhydryl of the prosthetic group.

It localises to the cytoplasm. It functions in the pathway lipid metabolism; fatty acid biosynthesis. Its function is as follows. Carrier of the growing fatty acid chain in fatty acid biosynthesis. This chain is Acyl carrier protein, found in Ruegeria pomeroyi (strain ATCC 700808 / DSM 15171 / DSS-3) (Silicibacter pomeroyi).